The following is a 511-amino-acid chain: ATP synthase subunit alpha (511 aa).

ATP is bound at residue 169 to 176; the sequence is GDRQTGKT.

It belongs to the ATPase alpha/beta chains family. F-type ATPases have 2 components, CF(1) - the catalytic core - and CF(0) - the membrane proton channel. CF(1) has five subunits: alpha(3), beta(3), gamma(1), delta(1), epsilon(1). CF(0) has three main subunits: a(1), b(2) and c(9-12). The alpha and beta chains form an alternating ring which encloses part of the gamma chain. CF(1) is attached to CF(0) by a central stalk formed by the gamma and epsilon chains, while a peripheral stalk is formed by the delta and b chains.

The protein resides in the cell inner membrane. The enzyme catalyses ATP + H2O + 4 H(+)(in) = ADP + phosphate + 5 H(+)(out). Functionally, produces ATP from ADP in the presence of a proton gradient across the membrane. The alpha chain is a regulatory subunit. This chain is ATP synthase subunit alpha, found in Janthinobacterium sp. (strain Marseille) (Minibacterium massiliensis).